The primary structure comprises 701 residues: A-type ATP synthase subunit I (701 aa).

10 consecutive transmembrane segments (helical) span residues 340–360 (WEIS…GLMF), 363–379 (FGNA…FYRY), 388–408 (IPKL…TGLL), 435–455 (LYNL…LLPF), 468–488 (MIFS…LGVI), 498–518 (FLFL…FIFM), 555–575 (GIVW…AILV), 583–603 (WGSA…LLLL), 612–632 (VLVF…MAYL), and 649–669 (IIIL…VVFI).

This sequence belongs to the V-ATPase 116 kDa subunit family. In terms of assembly, has multiple subunits with at least A(3), B(3), C, D, E, F, H, I and proteolipid K(x).

Its subcellular location is the cell membrane. Functionally, component of the A-type ATP synthase that produces ATP from ADP in the presence of a proton gradient across the membrane. The chain is A-type ATP synthase subunit I from Saccharolobus solfataricus (strain ATCC 35092 / DSM 1617 / JCM 11322 / P2) (Sulfolobus solfataricus).